Consider the following 355-residue polypeptide: UDP-N-acetylglucosamine--N-acetylmuramyl-(pentapeptide) pyrophosphoryl-undecaprenol N-acetylglucosamine transferase (355 aa).

UDP-N-acetyl-alpha-D-glucosamine contacts are provided by residues threonine 15 to glycine 17, asparagine 127, arginine 163, serine 191, isoleucine 244, alanine 263 to glutamate 268, and glutamine 288.

Belongs to the glycosyltransferase 28 family. MurG subfamily.

Its subcellular location is the cell inner membrane. The catalysed reaction is di-trans,octa-cis-undecaprenyl diphospho-N-acetyl-alpha-D-muramoyl-L-alanyl-D-glutamyl-meso-2,6-diaminopimeloyl-D-alanyl-D-alanine + UDP-N-acetyl-alpha-D-glucosamine = di-trans,octa-cis-undecaprenyl diphospho-[N-acetyl-alpha-D-glucosaminyl-(1-&gt;4)]-N-acetyl-alpha-D-muramoyl-L-alanyl-D-glutamyl-meso-2,6-diaminopimeloyl-D-alanyl-D-alanine + UDP + H(+). The protein operates within cell wall biogenesis; peptidoglycan biosynthesis. Cell wall formation. Catalyzes the transfer of a GlcNAc subunit on undecaprenyl-pyrophosphoryl-MurNAc-pentapeptide (lipid intermediate I) to form undecaprenyl-pyrophosphoryl-MurNAc-(pentapeptide)GlcNAc (lipid intermediate II). This chain is UDP-N-acetylglucosamine--N-acetylmuramyl-(pentapeptide) pyrophosphoryl-undecaprenol N-acetylglucosamine transferase, found in Salmonella choleraesuis (strain SC-B67).